The chain runs to 335 residues: Glyceraldehyde-3-phosphate dehydrogenase (335 aa).

NAD(+) is bound by residues 12–13 (RI), Asp36, Arg80, and Ser122. D-glyceraldehyde 3-phosphate-binding positions include 152-154 (SCT), Thr183, Arg198, 211-212 (TG), and Arg234. The active-site Nucleophile is Cys153. An NAD(+)-binding site is contributed by Asn316.

Belongs to the glyceraldehyde-3-phosphate dehydrogenase family. As to quaternary structure, homotetramer.

The protein localises to the cytoplasm. The enzyme catalyses D-glyceraldehyde 3-phosphate + phosphate + NAD(+) = (2R)-3-phospho-glyceroyl phosphate + NADH + H(+). It functions in the pathway carbohydrate degradation; glycolysis; pyruvate from D-glyceraldehyde 3-phosphate: step 1/5. Its function is as follows. Catalyzes the oxidative phosphorylation of glyceraldehyde 3-phosphate (G3P) to 1,3-bisphosphoglycerate (BPG) using the cofactor NAD. The first reaction step involves the formation of a hemiacetal intermediate between G3P and a cysteine residue, and this hemiacetal intermediate is then oxidized to a thioester, with concomitant reduction of NAD to NADH. The reduced NADH is then exchanged with the second NAD, and the thioester is attacked by a nucleophilic inorganic phosphate to produce BPG. The sequence is that of Glyceraldehyde-3-phosphate dehydrogenase (gap) from Xanthobacter flavus.